A 366-amino-acid chain; its full sequence is Succinyl-diaminopimelate desuccinylase (366 aa).

His66 is a Zn(2+) binding site. The active site involves Asp68. Zn(2+) is bound at residue Asp97. Residue Glu127 is the Proton acceptor of the active site. Residues Glu128, Glu156, and His341 each contribute to the Zn(2+) site.

Belongs to the peptidase M20A family. DapE subfamily. As to quaternary structure, homodimer. Zn(2+) is required as a cofactor. The cofactor is Co(2+).

The catalysed reaction is N-succinyl-(2S,6S)-2,6-diaminopimelate + H2O = (2S,6S)-2,6-diaminopimelate + succinate. It functions in the pathway amino-acid biosynthesis; L-lysine biosynthesis via DAP pathway; LL-2,6-diaminopimelate from (S)-tetrahydrodipicolinate (succinylase route): step 3/3. Functionally, catalyzes the hydrolysis of N-succinyl-L,L-diaminopimelic acid (SDAP), forming succinate and LL-2,6-diaminopimelate (DAP), an intermediate involved in the bacterial biosynthesis of lysine and meso-diaminopimelic acid, an essential component of bacterial cell walls. The protein is Succinyl-diaminopimelate desuccinylase of Aliarcobacter butzleri (strain RM4018) (Arcobacter butzleri).